A 243-amino-acid chain; its full sequence is UPF0246 protein MGAS10750_Spy1880 (243 aa).

The protein belongs to the UPF0246 family.

The protein is UPF0246 protein MGAS10750_Spy1880 of Streptococcus pyogenes serotype M4 (strain MGAS10750).